The following is a 359-amino-acid chain: Cytoplasmic tRNA 2-thiolation protein 1 (359 aa).

This sequence belongs to the TtcA family. CTU1/NCS6/ATPBD3 subfamily. In terms of assembly, interacts with NCS2 and URM1. May act by forming a heterodimer with NCS2. Component of a large molecular weight complex of more than 250 kDa.

Its subcellular location is the cytoplasm. The protein resides in the mitochondrion. Its pathway is tRNA modification; 5-methoxycarbonylmethyl-2-thiouridine-tRNA biosynthesis. In terms of biological role, plays a central role in 2-thiolation of mcm(5)S(2)U at tRNA wobble positions of tRNA(Lys), tRNA(Glu) and tRNA(Gln). Directly binds tRNAs and probably acts by catalyzing adenylation of tRNAs, an intermediate required for 2-thiolation. It is unclear whether it acts as a sulfurtransferase that transfers sulfur from thiocarboxylated URM1 onto the uridine of tRNAs at wobble position. Prior mcm(5) tRNA modification by the elongator complex is required for 2-thiolation. May also be involved in protein urmylation. May also be involved in protein urmylation and in invasive and pseudohyphal growth. This Saccharomyces cerevisiae (strain ATCC 204508 / S288c) (Baker's yeast) protein is Cytoplasmic tRNA 2-thiolation protein 1.